Consider the following 172-residue polypeptide: Propanediol dehydratase small subunit (172 aa).

The protein belongs to the diol/glycerol dehydratase small subunit family. In terms of assembly, the propanediol dehydratase enzyme is a heterotrimeric complex composed of a large (PduC), a medium (PduD) and a small (PduE) subunit. It depends on adenosylcob(III)alamin as a cofactor.

It localises to the bacterial microcompartment. The enzyme catalyses propane-1,2-diol = propanal + H2O. The protein operates within polyol metabolism; 1,2-propanediol degradation. Part of the PduCDE complex that catalyzes the dehydration of 1,2-propanediol (1,2-PD) to propionaldehyde. Localized in the bacterial microcompartment (BMC) dedicated to 1,2-PD degradation. In terms of biological role, expression of a cosmid containing the full 21-gene pdu operon in E.coli allows E.coli to grow on 1,2-propanediol (1,2-PD) with the appearance of BMCs in its cytoplasm. Functionally, the 1,2-PD-specific bacterial microcompartment (BMC) concentrates low levels of 1,2-PD catabolic enzymes, concentrates volatile reaction intermediates thus enhancing pathway flux and keeps the level of toxic, mutagenic propionaldehyde low. This Citrobacter freundii protein is Propanediol dehydratase small subunit.